Reading from the N-terminus, the 528-residue chain is ATP synthase subunit alpha (528 aa).

169 to 176 contacts ATP; the sequence is GDRQTGKT.

It belongs to the ATPase alpha/beta chains family. In terms of assembly, F-type ATPases have 2 components, CF(1) - the catalytic core - and CF(0) - the membrane proton channel. CF(1) has five subunits: alpha(3), beta(3), gamma(1), delta(1), epsilon(1). CF(0) has three main subunits: a(1), b(2) and c(9-12). The alpha and beta chains form an alternating ring which encloses part of the gamma chain. CF(1) is attached to CF(0) by a central stalk formed by the gamma and epsilon chains, while a peripheral stalk is formed by the delta and b chains.

The protein resides in the cell membrane. The enzyme catalyses ATP + H2O + 4 H(+)(in) = ADP + phosphate + 5 H(+)(out). Functionally, produces ATP from ADP in the presence of a proton gradient across the membrane. The alpha chain is a regulatory subunit. The polypeptide is ATP synthase subunit alpha (Mycoplasmopsis agalactiae (strain NCTC 10123 / CIP 59.7 / PG2) (Mycoplasma agalactiae)).